The sequence spans 532 residues: Membrane protein insertase YidC (532 aa).

5 consecutive transmembrane segments (helical) span residues F7 to M27, L336 to I356, G413 to I433, L450 to I470, and P492 to I512.

The protein belongs to the OXA1/ALB3/YidC family. Type 1 subfamily. In terms of assembly, interacts with the Sec translocase complex via SecD. Specifically interacts with transmembrane segments of nascent integral membrane proteins during membrane integration.

It is found in the cell membrane. Required for the insertion and/or proper folding and/or complex formation of integral membrane proteins into the membrane. Involved in integration of membrane proteins that insert both dependently and independently of the Sec translocase complex, as well as at least some lipoproteins. Aids folding of multispanning membrane proteins. The sequence is that of Membrane protein insertase YidC from Buchnera aphidicola subsp. Acyrthosiphon pisum (strain 5A).